The primary structure comprises 163 residues: Single-stranded DNA-binding protein 2 (163 aa).

In terms of domain architecture, SSB spans 1-104 (MINNVVLVGR…VVADNFQMLE (104 aa)). The interval 109 to 163 (REGGSTGSFNGGFNNNTSSSNSYSAPAQQTPNFGRDDSPFGNSNPMDISDDDLPF) is disordered. Over residues 119-130 (GGFNNNTSSSNS) the composition is skewed to low complexity. Residues 131–140 (YSAPAQQTPN) show a composition bias toward polar residues. The Important for interaction with partner proteins signature appears at 158–163 (DDDLPF).

In terms of assembly, homotetramer.

In terms of biological role, plays an important role in DNA replication, recombination and repair. Binds to ssDNA and to an array of partner proteins to recruit them to their sites of action during DNA metabolism. This is Single-stranded DNA-binding protein 2 (ssb2) from Streptococcus pyogenes serotype M6 (strain ATCC BAA-946 / MGAS10394).